The sequence spans 150 residues: MTKVKKEKAGEEETGGTEKSYQELIANINPIANPLASRKLSKKLYKCVKKAAKVKQIRRGVKEVQKFINKGETGIVVFAGDTLPIDVYCHLPIMCEDRSLPYAYVPSKVDLGSSAGSKRPTCVIMIKPHDEYKEAYDECVEEVTSLPKPI.

It belongs to the eukaryotic ribosomal protein eL8 family. As to quaternary structure, component of the small nucleolar ribonucleoprotein particle containing H/ACA-type snoRNAs (H/ACA snoRNPs). Component of the telomerase holoenzyme complex.

The protein localises to the nucleus. It localises to the nucleolus. Functionally, required for ribosome biogenesis. Part of a complex which catalyzes pseudouridylation of rRNA. This involves the isomerization of uridine such that the ribose is subsequently attached to C5, instead of the normal N1. Pseudouridine ('psi') residues may serve to stabilize the conformation of rRNAs. The polypeptide is H/ACA ribonucleoprotein complex subunit 2-like protein (nhp2) (Danio rerio (Zebrafish)).